The primary structure comprises 450 residues: Solute carrier family 52, riboflavin transporter, member 2 (450 aa).

The next 5 membrane-spanning stretches (helical) occupy residues 14-34 (LLVA…WVEL), 47-67 (LPSY…LVTL), 79-99 (IPIQ…APLW), 114-136 (FLTL…LPFL), and 147-167 (FFLG…AQGV). Asparagine 178 carries an N-linked (GlcNAc...) asparagine glycan. Residues 201 to 221 (FFWVLTALLGTSAAAFQGLLL) form a helical membrane-spanning segment. The disordered stretch occupies residues 230 to 268 (ATMGTGLRVETPGTEEEEEEEEASPLQEPPGQVASIVSS). Residues 242-252 (GTEEEEEEEEA) show a composition bias toward acidic residues. Helical transmembrane passes span 282-302 (ACLL…LPAV), 317-337 (LAVV…MAVL), 344-364 (LYGL…LAVL), 371-391 (VGTS…AGVF), and 409-429 (ALLA…IAMF).

It belongs to the riboflavin transporter family. Highly expressed in the placenta and small intestine, moderately in the kidney, colon, lung, prostate, uterus, and thymus, and weakly in all other tissues.

The protein localises to the cell membrane. It catalyses the reaction riboflavin(in) = riboflavin(out). With respect to regulation, riboflavin transport is Na(+)-independent but moderately pH-sensitive. Activity is strongly inhibited by riboflavin analogs, such as lumiflavin. Weakly inhibited by flavin adenine dinucleotide (FAD) and flavin mononucleotide (FMN). Its function is as follows. Plasma membrane transporter mediating the uptake by cells of the water soluble vitamin B2/riboflavin that plays a key role in biochemical oxidation-reduction reactions of the carbohydrate, lipid, and amino acid metabolism. May also act as a receptor for 4-hydroxybutyrate. The sequence is that of Solute carrier family 52, riboflavin transporter, member 2 (Slc52a2) from Rattus norvegicus (Rat).